Reading from the N-terminus, the 358-residue chain is U5 small nuclear ribonucleoprotein 40 kDa protein (358 aa).

A Glycyl lysine isopeptide (Lys-Gly) (interchain with G-Cter in SUMO2) cross-link involves residue Lys18. The residue at position 21 (Arg21) is an Asymmetric dimethylarginine. WD repeat units lie at residues 65 to 104 (GHEGEVYCCKFHPNGSTLASAGFDRLILLWNVYGDCDNYA), 108 to 147 (GHSGAVMELHYNTDGSMLFSASTDKTVAVWDSETGERVKR), 150 to 190 (GHTS…AIQT), 192 to 231 (QNTYQVLAVTFNDTSDQIISGGIDNDIKVWDLRQNKLTYT), 234 to 273 (GHADSVTGLSLSSEGSYLLSNAMDNTVRVWDVRPFAPKER), 284 to 323 (NFEKNLLRCSWSPDGSKIAAGSADRFVYVWDTTSRRILYK), and 326 to 358 (GHAGSINEVAFHPDEPIILSASSDKRLYMGEIQ). Lys271 participates in a covalent cross-link: Glycyl lysine isopeptide (Lys-Gly) (interchain with G-Cter in SUMO2).

As to quaternary structure, component of the pre-catalytic and catalytic spliceosome complexes. Component of the postcatalytic spliceosome P complex. Part of the U5 snRNP complex. Interacts with PRPF8. Component of the U4/U6-U5 tri-snRNP complex composed of the U4, U6 and U5 snRNAs and at least PRPF3, PRPF4, PRPF6, PRPF8, PRPF31, SNRNP200, TXNL4A, WDR57, SNRNP40, DDX23, CD2BP2, PPIH, SNU13, EFTUD2, SART1 and USP39. Component of the minor spliceosome, which splices U12-type introns.

The protein resides in the nucleus. In terms of biological role, required for pre-mRNA splicing as component of the activated spliceosome. Component of the U5 small nuclear ribonucleoprotein (snRNP) complex and the U4/U6-U5 tri-snRNP complex, building blocks of the spliceosome. As a component of the minor spliceosome, involved in the splicing of U12-type introns in pre-mRNAs. This is U5 small nuclear ribonucleoprotein 40 kDa protein (SNRNP40) from Bos taurus (Bovine).